Here is a 358-residue protein sequence, read N- to C-terminus: Alanine racemase (358 aa).

Lys-34 (proton acceptor; specific for D-alanine) is an active-site residue. Lys-34 is modified (N6-(pyridoxal phosphate)lysine). Arg-129 is a substrate binding site. Residue Tyr-254 is the Proton acceptor; specific for L-alanine of the active site. Substrate is bound at residue Met-302.

It belongs to the alanine racemase family. Pyridoxal 5'-phosphate serves as cofactor.

It carries out the reaction L-alanine = D-alanine. It functions in the pathway amino-acid biosynthesis; D-alanine biosynthesis; D-alanine from L-alanine: step 1/1. Catalyzes the interconversion of L-alanine and D-alanine. May also act on other amino acids. This is Alanine racemase (alr) from Vibrio parahaemolyticus serotype O3:K6 (strain RIMD 2210633).